Here is a 303-residue protein sequence, read N- to C-terminus: Phospholipase A1 2 (303 aa).

Cys6 and Cys90 are joined by a disulfide. The active-site Nucleophile is the Ser140. Asp168 acts as the Charge relay system in catalysis. Residues Cys179 and Cys184 are joined by a disulfide bond. The active-site Charge relay system is the His232. Cystine bridges form between Cys247–Cys271, Cys248–Cys296, and Cys264–Cys269.

It belongs to the AB hydrolase superfamily. Lipase family. In terms of tissue distribution, expressed by the venom gland.

The protein localises to the secreted. The catalysed reaction is a 1,2-diacyl-sn-glycero-3-phosphocholine + H2O = a 2-acyl-sn-glycero-3-phosphocholine + a fatty acid + H(+). In terms of biological role, catalyzes the hydrolysis of phosphatidylcholine with phospholipase A1 activity. May act as an allergen and induce hemolytic activity. This is Phospholipase A1 2 from Dolichovespula maculata (Bald-faced hornet).